The chain runs to 147 residues: Small ribosomal subunit protein uS12 (147 aa).

This sequence belongs to the universal ribosomal protein uS12 family. Part of the 30S ribosomal subunit.

Its function is as follows. With S4 and S5 plays an important role in translational accuracy. Located at the interface of the 30S and 50S subunits. This is Small ribosomal subunit protein uS12 from Saccharolobus solfataricus (strain ATCC 35092 / DSM 1617 / JCM 11322 / P2) (Sulfolobus solfataricus).